Consider the following 231-residue polypeptide: MARARSDSPLLFEIVEKPDFSFETKAMADGLWPVAGMDEAGRGPLAGPVVAAAVVLDPANIPEGLDDSKRLSHFQREALFLRILGSAQAVSMASISAEGIDGSNILKASLEAMRRALVGLSVRPKLALADGRDVPPGLPCDGRALIKGDQRSQSIAAASIVAKVMRDRMMCGCGSHHDRYGFEVHMGYATARHRTAIETHGPVARLHRVSFAPFRLGGTEVVEEESLAGLD.

Residues 32 to 223 form the RNase H type-2 domain; sequence WPVAGMDEAG…FRLGGTEVVE (192 aa). A divalent metal cation contacts are provided by aspartate 38, glutamate 39, and aspartate 130.

The protein belongs to the RNase HII family. Requires Mn(2+) as cofactor. Mg(2+) is required as a cofactor.

It is found in the cytoplasm. The catalysed reaction is Endonucleolytic cleavage to 5'-phosphomonoester.. Functionally, endonuclease that specifically degrades the RNA of RNA-DNA hybrids. This is Ribonuclease HII from Mesorhizobium japonicum (strain LMG 29417 / CECT 9101 / MAFF 303099) (Mesorhizobium loti (strain MAFF 303099)).